Here is a 158-residue protein sequence, read N- to C-terminus: 6,7-dimethyl-8-ribityllumazine synthase (158 aa).

Residues phenylalanine 22, 57-59, and 81-83 contribute to the 5-amino-6-(D-ribitylamino)uracil site; these read AVE and AVI. A (2S)-2-hydroxy-3-oxobutyl phosphate-binding site is contributed by 86–87; the sequence is GT. Histidine 89 serves as the catalytic Proton donor. A 5-amino-6-(D-ribitylamino)uracil-binding site is contributed by phenylalanine 114. Residue arginine 128 coordinates (2S)-2-hydroxy-3-oxobutyl phosphate.

This sequence belongs to the DMRL synthase family. Forms an icosahedral capsid composed of 60 subunits, arranged as a dodecamer of pentamers.

The catalysed reaction is (2S)-2-hydroxy-3-oxobutyl phosphate + 5-amino-6-(D-ribitylamino)uracil = 6,7-dimethyl-8-(1-D-ribityl)lumazine + phosphate + 2 H2O + H(+). The protein operates within cofactor biosynthesis; riboflavin biosynthesis; riboflavin from 2-hydroxy-3-oxobutyl phosphate and 5-amino-6-(D-ribitylamino)uracil: step 1/2. Its function is as follows. Catalyzes the formation of 6,7-dimethyl-8-ribityllumazine by condensation of 5-amino-6-(D-ribitylamino)uracil with 3,4-dihydroxy-2-butanone 4-phosphate. This is the penultimate step in the biosynthesis of riboflavin. This is 6,7-dimethyl-8-ribityllumazine synthase from Shewanella loihica (strain ATCC BAA-1088 / PV-4).